The sequence spans 213 residues: mRNA-decapping protein D9 (213 aa).

Residues 30 to 209 (KDTHVFAACI…EYLSYIYNML (180 aa)) enclose the Nudix hydrolase domain. Positions 111–132 (GKLDKKESIKDCLRRELKEESD) match the Nudix box motif. Mg(2+) is bound at residue Glu117. Catalysis depends on Glu126, which acts as the Nucleophile. Mg(2+) is bound by residues Glu130 and Asp151.

It belongs to the Nudix hydrolase family. The cofactor is Mg(2+). Mn(2+) is required as a cofactor.

Decapping enzyme required for the removal of the 5'-end m7GpppN cap tethered to viral and host mRNAs to allow their decay in cells. May therefore accelerate viral and cellular mRNA turnover to eliminate competing host mRNAs and allow stage-specific synthesis of viral proteins. Acceleration of the turnover of cellular transcripts may even promote the shutoff of host protein synthesis. Does not cleave unmethylated RNAs or RNAs shorter than 24 nucleotides. In Homo sapiens (Human), this protein is mRNA-decapping protein D9.